A 1421-amino-acid polypeptide reads, in one-letter code: Envelopment polyprotein (1421 aa).

The N-terminal stretch at 1-20 (MEGSYWWLSLLALLAWGANG) is a signal peptide. The Lumenal segment spans residues 21 to 479 (ESTSPAETSP…CRMSHRPRTC (459 aa)). Low complexity predominate over residues 22-31 (STSPAETSPA). Positions 22 to 42 (STSPAETSPAPTTPNPPVVNP) are disordered. Residues N97 and N346 are each glycosylated (N-linked (GlcNAc...) asparagine; by host). Residues 480–500 (LALFIWLGAGYGITCIAGYMV) traverse the membrane as a helical segment. Over 501–610 (YYAILALSML…KLGTLLKRLS (110 aa)) the chain is Cytoplasmic. Residues 611 to 631 (WVTVFLCLFLTAIAPVQGQVT) form a helical membrane-spanning segment. The Lumenal portion of the chain corresponds to 632–643 (TSPVLPSNQSTE). N639 is a glycosylation site (N-linked (GlcNAc...) asparagine; by host). Residues 644–664 (CTLLPPPVFLIFSAVLMSKTL) traverse the membrane as a helical segment. Topologically, residues 665 to 708 (KRMGPVNKVGAAGHSARRTNSPKNLYKSKQIANTKSGPREPRRR) are cytoplasmic. Residues 709 to 729 (VVVKALLILTASSALQSIHLA) traverse the membrane as a helical segment. Positions 722–776 (ALQSIHLAQAFDSGSLPEGAWEEEMQLVQGCNQECSLEEDECSCPDGQSMTRKLL) are excised as a propeptide. Topologically, residues 730 to 1330 (QAFDSGSLPE…GSFFRNYLGS (601 aa)) are lumenal. Cystine bridges form between C901-C1096 and C929-C934. N1081 and N1299 each carry an N-linked (GlcNAc...) asparagine; by host glycan. The chain crosses the membrane as a helical span at residues 1331–1351 (ITLGIVLTLLPVAVVLLFFCY). Over 1352–1421 (GDKLFKLCSC…GKGKNYKELV (70 aa)) the chain is Cytoplasmic.

This sequence belongs to the nairovirus envelope glycoprotein family. As to quaternary structure, heterodimer with glycoprotein C; in prefusion state. In terms of assembly, heterodimer with glycoprotein N; in prefusion state. Homotrimeric; in postfusion state. In terms of processing, specific enzymatic cleavage by host MBTPS1/S1P/SKI-1 endopeptidase yield glycoprotein N. Specific enzymatic cleavages by host furin-like protease and MBTPS1/S1P endopeptidase yield GP38. Post-translationally, glycosylated.

It localises to the host endoplasmic reticulum membrane. Its subcellular location is the virion membrane. The protein resides in the host Golgi apparatus membrane. Glycoprotein N and glycoprotein C interact with each other and are present at the surface of the virion. Glycoprotein N probably locks the Gn-Gc complex in a prefusion state. Glycoprotein N and glycoprotein C are able to attach the virion to host cell receptors. This attachment induces virion internalization predominantly through clathrin-dependent endocytosis. Its function is as follows. Glycoprotein C and glycoprotein N interact with each other and are present at the surface of the virion. The spikes at the surface of the virion are formed by an N-terminal extension of glycoprotein C. Glycoprotein N and glycoprotein C are able to attach the virion to host cell receptors. This attachment induces virion internalization predominantly through clathrin-dependent endocytosis. Class II fusion protein that promotes fusion of viral membrane with host endosomal membrane after endocytosis of the virion. Exposure to potassium is necessary for the conformational change leading to fusion. The sequence is that of Envelopment polyprotein (GP) from Ixodes.